We begin with the raw amino-acid sequence, 363 residues long: MALLELRNVIRRFGDFTAVDNVSLSIQAGEFFTLLGPSGCGKTTLLRMIAGFDVPDSGQILLDGQDIANTPPEKRPIHTVFQSYALFPHMTVADNVAFPLKMSKVAPAEIKKRMEKALEEVQLSRFTHRFPHELSGGQKQRVAFARGLINRPRLLLMDEPLGALDAKLREDMQRELINLQKEVGITFIFVTHSQDEALALSQRIAVMNLGNIEQIGTPSAIYGTPANRFIADFIGKINLMEARVTQISNTAMTLEINGLGTTVLPPKKEIQAGDQGVIAIRPEQVAVHALAKQAEIPHAHTGKVLDFLYVGDVTTYVIELDSGIQIEALLANSSPGRARFFEVDDPVIVSWPQEAAQFLVDRP.

In terms of domain architecture, ABC transporter spans 4–234 (LELRNVIRRF…PANRFIADFI (231 aa)). 36–43 (GPSGCGKT) contributes to the ATP binding site.

The protein belongs to the ABC transporter superfamily. Spermidine/putrescine importer (TC 3.A.1.11.1) family. The complex is composed of two ATP-binding proteins (PotA), two transmembrane proteins (PotB and PotC) and a solute-binding protein (PotD).

The protein resides in the cell inner membrane. It carries out the reaction ATP + H2O + polyamine-[polyamine-binding protein]Side 1 = ADP + phosphate + polyamineSide 2 + [polyamine-binding protein]Side 1.. Its function is as follows. Part of the ABC transporter complex PotABCD involved in spermidine/putrescine import. Responsible for energy coupling to the transport system. The protein is Spermidine/putrescine import ATP-binding protein PotA of Nitrosomonas eutropha (strain DSM 101675 / C91 / Nm57).